The chain runs to 210 residues: Glutathione S-transferase P 2 (210 aa).

Residues 2 to 81 (PPYTIVYFPS…HLGRSLGLYG (80 aa)) form the GST N-terminal domain. Residues Tyr8, Arg14, Trp39, Lys45, 52–53 (QL), and 65–66 (QS) contribute to the glutathione site. One can recognise a GST C-terminal domain in the interval 83–204 (NQREAAQVDM…SSPEHVNRPI (122 aa)).

This sequence belongs to the GST superfamily. Pi family. Homodimer. Selectively expressed in gall bladder, colon, heart, and skeletal muscle.

It carries out the reaction RX + glutathione = an S-substituted glutathione + a halide anion + H(+). In terms of biological role, conjugation of reduced glutathione to a wide number of exogenous and endogenous hydrophobic electrophiles. Cannot metabolize 1-chloro-2,4-dinitrobenzene. In Mus musculus (Mouse), this protein is Glutathione S-transferase P 2 (Gstp2).